A 261-amino-acid chain; its full sequence is Carnitinyl-CoA dehydratase (261 aa).

Residue Glu-111 is the Nucleophile of the active site. Residue Glu-131 is the Proton acceptor of the active site.

This sequence belongs to the enoyl-CoA hydratase/isomerase family.

The catalysed reaction is (R)-carnitinyl-CoA = crotonobetainyl-CoA + H2O. The protein operates within amine and polyamine metabolism; carnitine metabolism. Its function is as follows. Catalyzes the reversible dehydration of L-carnitinyl-CoA to crotonobetainyl-CoA. This chain is Carnitinyl-CoA dehydratase, found in Salmonella typhimurium (strain LT2 / SGSC1412 / ATCC 700720).